The following is a 328-amino-acid chain: Lipoyl synthase (328 aa).

7 residues coordinate [4Fe-4S] cluster: Cys-56, Cys-61, Cys-67, Cys-82, Cys-86, Cys-89, and Ser-298. The region spanning 68–287 is the Radical SAM core domain; it reads WEDREATFLI…KEEAEEIGFS (220 aa).

It belongs to the radical SAM superfamily. Lipoyl synthase family. It depends on [4Fe-4S] cluster as a cofactor.

It is found in the cytoplasm. The enzyme catalyses [[Fe-S] cluster scaffold protein carrying a second [4Fe-4S](2+) cluster] + N(6)-octanoyl-L-lysyl-[protein] + 2 oxidized [2Fe-2S]-[ferredoxin] + 2 S-adenosyl-L-methionine + 4 H(+) = [[Fe-S] cluster scaffold protein] + N(6)-[(R)-dihydrolipoyl]-L-lysyl-[protein] + 4 Fe(3+) + 2 hydrogen sulfide + 2 5'-deoxyadenosine + 2 L-methionine + 2 reduced [2Fe-2S]-[ferredoxin]. It participates in protein modification; protein lipoylation via endogenous pathway; protein N(6)-(lipoyl)lysine from octanoyl-[acyl-carrier-protein]: step 2/2. In terms of biological role, catalyzes the radical-mediated insertion of two sulfur atoms into the C-6 and C-8 positions of the octanoyl moiety bound to the lipoyl domains of lipoate-dependent enzymes, thereby converting the octanoylated domains into lipoylated derivatives. This is Lipoyl synthase from Streptomyces avermitilis (strain ATCC 31267 / DSM 46492 / JCM 5070 / NBRC 14893 / NCIMB 12804 / NRRL 8165 / MA-4680).